The sequence spans 284 residues: NAD kinase (284 aa).

Catalysis depends on aspartate 70, which acts as the Proton acceptor. Residues 70–71 (DG), 139–140 (NE), lysine 167, aspartate 169, leucine 177, 180–185 (TAYNLS), and glutamine 236 contribute to the NAD(+) site.

It belongs to the NAD kinase family. Requires a divalent metal cation as cofactor.

The protein resides in the cytoplasm. It catalyses the reaction NAD(+) + ATP = ADP + NADP(+) + H(+). Functionally, involved in the regulation of the intracellular balance of NAD and NADP, and is a key enzyme in the biosynthesis of NADP. Catalyzes specifically the phosphorylation on 2'-hydroxyl of the adenosine moiety of NAD to yield NADP. In Helicobacter pylori (strain J99 / ATCC 700824) (Campylobacter pylori J99), this protein is NAD kinase.